Reading from the N-terminus, the 387-residue chain is Protein arginine N-methyltransferase 1 (387 aa).

The disordered stretch occupies residues 1–60; it reads MDQRKGSGSDANGGLAEATASRLRFEDPDEVMEENPAAAAATVGAEEEGGEGGGGEEVIG. The segment covering 34 to 44 has biased composition (low complexity); that stretch reads ENPAAAAATVG. An SAM-dependent MTase PRMT-type domain is found at 66-387; it reads ADYYFDSYSH…VSRTQHYKMR (322 aa). His79, Arg88, Gly112, Glu134, and Glu163 together coordinate S-adenosyl-L-methionine. Active-site residues include Glu178 and Glu187.

The protein belongs to the class I-like SAM-binding methyltransferase superfamily. Protein arginine N-methyltransferase family.

It is found in the nucleus. It carries out the reaction L-arginyl-[protein] + S-adenosyl-L-methionine = N(omega)-methyl-L-arginyl-[protein] + S-adenosyl-L-homocysteine + H(+). The catalysed reaction is L-arginyl-[protein] + 2 S-adenosyl-L-methionine = N(omega),N(omega)-dimethyl-L-arginyl-[protein] + 2 S-adenosyl-L-homocysteine + 2 H(+). Arginine methyltransferase that methylates (mono and asymmetric dimethylation) the guanidino nitrogens of arginyl residues present in target proteins. This Oryza sativa subsp. indica (Rice) protein is Protein arginine N-methyltransferase 1 (PRMT1).